Here is a 133-residue protein sequence, read N- to C-terminus: Small ribosomal subunit protein uS9 (133 aa).

Basic and acidic residues predominate over residues 95–113 (GDSKQELKSRGFLTRDPRK). Positions 95–133 (GDSKQELKSRGFLTRDPRKKERKKYGHKKARKSFQFSKR) are disordered. A compositionally biased stretch (basic residues) spans 114-133 (KERKKYGHKKARKSFQFSKR).

This sequence belongs to the universal ribosomal protein uS9 family.

The protein is Small ribosomal subunit protein uS9 of Chlamydia felis (strain Fe/C-56) (Chlamydophila felis).